Here is a 384-residue protein sequence, read N- to C-terminus: MDAQDEDNPFTNLETTVDVTEEIQDWRFLSNVEKDQGTYTIPKRGQKDFEPDGTNKQHSALDLSRKAMFDALSVERLISAKHAIIATWNAQNGMSCVEKAHGPLFKTMGTADSQNRMWLLPEETLYLVERGSMECWSEEGLPMSLQAVYSASIPLCGSLENYLVYAHLRRCGFSVIRSNLVPVKEDEYRCDSKIMNFKDLLFLGLGKASQILQTFNFRKLAFPFSKRRRQSILLHDTFYTYEEVYHDLQIVRGYVPIACNLITSSDSLFQITFHAYKPSASFKKSALSEPDFRICVVSSQDTLLPTIFEIDALFSSTPLRQNMPQHMFQRLKEGYRNIIIAIVDYGVISYIRLSDVCFEEKVYTDFSKKGSKRKRVSKKFQQLV.

A disordered region spans residues 37–57 (GTYTIPKRGQKDFEPDGTNKQ). The span at 45–55 (GQKDFEPDGTN) shows a compositional bias: basic and acidic residues.

The protein belongs to the SEN54 family. In terms of assembly, tRNA splicing endonuclease is a heterotetramer composed of sen2, sen15, sen34 and sen54. Interacts directly with sen2.

Functionally, non-catalytic subunit of the tRNA-splicing endonuclease complex, a complex responsible for identification and cleavage of the splice sites in pre-tRNA. It cleaves pre-tRNA at the 5' and 3' splice sites to release the intron. The products are an intron and two tRNA half-molecules bearing 2',3' cyclic phosphate and 5'-OH termini. There are no conserved sequences at the splice sites, but the intron is invariably located at the same site in the gene, placing the splice sites an invariant distance from the constant structural features of the tRNA body. May be required to embody the molecular ruler of the complex. The sequence is that of Probable tRNA-splicing endonuclease subunit sen54 (sen54) from Schizosaccharomyces pombe (strain 972 / ATCC 24843) (Fission yeast).